The primary structure comprises 1014 residues: Probable LRR receptor-like serine/threonine-protein kinase At1g07650 (1014 aa).

Residues 1–23 (MIYLHRIYFIIVLFTLIFHGRLG) form the signal peptide. At 24-619 (FSDNNKLHEA…KPPVYYDTKD (596 aa)) the chain is on the extracellular side. Residues Asn76, Asn87, and Asn101 are each glycosylated (N-linked (GlcNAc...) asparagine). LRR repeat units follow at residues 89-112 (SCHV…EFSK), 113-137 (LRHL…WASM), 139-160 (LEDL…LTRL), 161-184 (TMLR…IGQL), 186-207 (HLEK…KLGL), 208-234 (LKNL…NWTR), 256-279 (LTSL…PLKN), 280-304 (LESI…IGDL), 305-327 (KKLK…SFEN), 329-352 (KKAD…FVER), and 354-376 (KNVD…DCNR). The N-linked (GlcNAc...) asparagine glycan is linked to Asn165. Residues Asn210, Asn220, and Asn231 are each glycosylated (N-linked (GlcNAc...) asparagine). N-linked (GlcNAc...) asparagine glycans are attached at residues Asn362, Asn389, Asn474, Asn481, and Asn511. The stretch at 516-539 (LHFAEIIFTDDNTLYSLGKRLFDI) is one LRR 12 repeat. Residue Asn570 is glycosylated (N-linked (GlcNAc...) asparagine). The chain crosses the membrane as a helical span at residues 620–640 (IILKVGVPVAAATLLLFIIVG). Topologically, residues 641 to 1014 (VFWKKRRDKN…DAEEKTGLLD (374 aa)) are cytoplasmic. The residue at position 667 (Thr667) is a Phosphothreonine. Residues 678-960 (FDVTRKIGEG…EGKTAMQELL (283 aa)) form the Protein kinase domain. ATP is bound by residues 684–692 (IGEGGFGSV) and Lys706. Tyr751 carries the post-translational modification Phosphotyrosine. The Proton acceptor role is filled by Asp805. Residues Ser809 and Ser838 each carry the phosphoserine modification. Phosphothreonine is present on residues Thr839 and Thr844. A Phosphotyrosine modification is found at Tyr852. Ser989 bears the Phosphoserine mark. Residues 989-1002 (SFSTSGPRTASANS) are compositionally biased toward polar residues. A disordered region spans residues 989-1014 (SFSTSGPRTASANSLVDAEEKTGLLD).

Belongs to the protein kinase superfamily. Ser/Thr protein kinase family.

It localises to the membrane. The catalysed reaction is L-seryl-[protein] + ATP = O-phospho-L-seryl-[protein] + ADP + H(+). It carries out the reaction L-threonyl-[protein] + ATP = O-phospho-L-threonyl-[protein] + ADP + H(+). The polypeptide is Probable LRR receptor-like serine/threonine-protein kinase At1g07650 (Arabidopsis thaliana (Mouse-ear cress)).